The following is a 215-amino-acid chain: Cytochrome b6 (215 aa).

The Cytoplasmic portion of the chain corresponds to 1–31 (MANVYDWFQERLEIQALADDVTSKYVPPHVN). The chain crosses the membrane as a helical span at residues 32-52 (IFYCLGGITLTCFLIQFATGF). Residue Cys-35 participates in heme c binding. Residues 53-89 (AMTFYYKPTVTEAYASVQYIMNEVSFGWLIRSIHRWS) lie on the Lumenal, thylakoid side of the membrane. Residues Arg-83, His-86, His-100, and Arg-103 each coordinate heme b. The chain crosses the membrane as a helical span at residues 90 to 110 (ASMMVLMMILHVFRVYLTGGF). The Cytoplasmic portion of the chain corresponds to 111–115 (KKPRE). Residues 116-136 (LTWISGVILAVITVSFGVTGY) traverse the membrane as a helical segment. Topologically, residues 137-185 (SLPWDQVGYWAVKIVSGVPEAIPVVGVLISDLLRGGSSVGQATLTRYYS) are lumenal, thylakoid. A helical transmembrane segment spans residues 186–206 (AHTFVLPWLIAVFMLLHFLMI). Positions 187 and 202 each coordinate heme b. The Cytoplasmic segment spans residues 207–215 (RKQGISGPL). Lys-208 provides a ligand contact to heme c.

The protein belongs to the cytochrome b family. PetB subfamily. The 4 large subunits of the cytochrome b6-f complex are cytochrome b6, subunit IV (17 kDa polypeptide, PetD), cytochrome f and the Rieske protein, while the 4 small subunits are PetG, PetL, PetM and PetN. The complex functions as a dimer. It depends on heme b as a cofactor. Heme c is required as a cofactor.

It localises to the cellular thylakoid membrane. Functionally, component of the cytochrome b6-f complex, which mediates electron transfer between photosystem II (PSII) and photosystem I (PSI), cyclic electron flow around PSI, and state transitions. The polypeptide is Cytochrome b6 (Mastigocladus laminosus (Fischerella sp.)).